A 226-amino-acid chain; its full sequence is ATP synthase F(0) complex subunit a (226 aa).

6 consecutive transmembrane segments (helical) span residues 6-26 (FASF…IILF), 68-88 (WSLM…LGLL), 97-117 (QLSM…VMGF), 138-158 (IPML…ALAV), 164-184 (ITAG…LSTI), and 189-209 (ALII…VALI).

It belongs to the ATPase A chain family. As to quaternary structure, component of the ATP synthase complex composed at least of ATP5F1A/subunit alpha, ATP5F1B/subunit beta, ATP5MC1/subunit c (homooctomer), MT-ATP6/subunit a, MT-ATP8/subunit 8, ATP5ME/subunit e, ATP5MF/subunit f, ATP5MG/subunit g, ATP5MK/subunit k, ATP5MJ/subunit j, ATP5F1C/subunit gamma, ATP5F1D/subunit delta, ATP5F1E/subunit epsilon, ATP5PF/subunit F6, ATP5PB/subunit b, ATP5PD/subunit d, ATP5PO/subunit OSCP. ATP synthase complex consists of a soluble F(1) head domain (subunits alpha(3) and beta(3)) - the catalytic core - and a membrane F(0) domain - the membrane proton channel (subunits c, a, 8, e, f, g, k and j). These two domains are linked by a central stalk (subunits gamma, delta, and epsilon) rotating inside the F1 region and a stationary peripheral stalk (subunits F6, b, d, and OSCP). Interacts with DNAJC30; interaction is direct.

It localises to the mitochondrion inner membrane. It carries out the reaction H(+)(in) = H(+)(out). In terms of biological role, subunit a, of the mitochondrial membrane ATP synthase complex (F(1)F(0) ATP synthase or Complex V) that produces ATP from ADP in the presence of a proton gradient across the membrane which is generated by electron transport complexes of the respiratory chain. ATP synthase complex consist of a soluble F(1) head domain - the catalytic core - and a membrane F(1) domain - the membrane proton channel. These two domains are linked by a central stalk rotating inside the F(1) region and a stationary peripheral stalk. During catalysis, ATP synthesis in the catalytic domain of F(1) is coupled via a rotary mechanism of the central stalk subunits to proton translocation. With the subunit c (ATP5MC1), forms the proton-conducting channel in the F(0) domain, that contains two crucial half-channels (inlet and outlet) that facilitate proton movement from the mitochondrial intermembrane space (IMS) into the matrix. Protons are taken up via the inlet half-channel and released through the outlet half-channel, following a Grotthuss mechanism. The polypeptide is ATP synthase F(0) complex subunit a (Pan troglodytes (Chimpanzee)).